A 198-amino-acid polypeptide reads, in one-letter code: Imidazole glycerol phosphate synthase subunit HisH (198 aa).

The region spanning 2–198 (KALLIDYGSG…ALARRYFEVL (197 aa)) is the Glutamine amidotransferase type-1 domain. The Nucleophile role is filled by C80. Residues H176 and E178 contribute to the active site.

In terms of assembly, heterodimer of HisH and HisF.

It is found in the cytoplasm. It carries out the reaction 5-[(5-phospho-1-deoxy-D-ribulos-1-ylimino)methylamino]-1-(5-phospho-beta-D-ribosyl)imidazole-4-carboxamide + L-glutamine = D-erythro-1-(imidazol-4-yl)glycerol 3-phosphate + 5-amino-1-(5-phospho-beta-D-ribosyl)imidazole-4-carboxamide + L-glutamate + H(+). The enzyme catalyses L-glutamine + H2O = L-glutamate + NH4(+). It functions in the pathway amino-acid biosynthesis; L-histidine biosynthesis; L-histidine from 5-phospho-alpha-D-ribose 1-diphosphate: step 5/9. Its function is as follows. IGPS catalyzes the conversion of PRFAR and glutamine to IGP, AICAR and glutamate. The HisH subunit catalyzes the hydrolysis of glutamine to glutamate and ammonia as part of the synthesis of IGP and AICAR. The resulting ammonia molecule is channeled to the active site of HisF. The chain is Imidazole glycerol phosphate synthase subunit HisH from Thermus thermophilus (strain ATCC BAA-163 / DSM 7039 / HB27).